The primary structure comprises 540 residues: V-set and immunoglobulin domain-containing protein 10 (540 aa).

Positions 1 to 30 (MAAGGSAPEPRVLVCLGALLAGWVAVGLEA) are cleaved as a signal peptide. Ig-like C2-type domains are found at residues 31 to 119 (VVIG…WLQV), 123 to 215 (PYQI…RKVT), 223 to 309 (PPPS…VQIR), and 311 to 404 (PSLL…IWLS). Residues 31–413 (VVIGEVHENV…SVKEPLNIGG (383 aa)) are Extracellular-facing. N-linked (GlcNAc...) asparagine glycans are attached at residues Asn-39, Asn-46, Asn-70, Asn-108, Asn-138, Asn-171, Asn-180, and Asn-198. The cysteines at positions 44 and 103 are disulfide-linked. 2 disulfide bridges follow: Cys-153/Cys-201 and Cys-245/Cys-290. N-linked (GlcNAc...) asparagine glycosylation occurs at Asn-326. Cysteines 331 and 388 form a disulfide. A helical membrane pass occupies residues 414 to 434 (IVGTIVSLLLLGLAIISGLLL). Residues 435 to 540 (HYSPVFCWKV…DIVQEEDRPV (106 aa)) lie on the Cytoplasmic side of the membrane. Positions 461-477 (DSEEEEEEEEEEEEDAA) are enriched in acidic residues. Disordered stretches follow at residues 461-500 (DSEE…QDHI) and 513-540 (QMGN…DRPV). Residues 482 to 500 (EGAREREELPKEIPKQDHI) show a composition bias toward basic and acidic residues. Residues 521–534 (LQDDSSEEQSDIVQ) show a composition bias toward acidic residues.

The protein localises to the membrane. The protein is V-set and immunoglobulin domain-containing protein 10 (VSIG10) of Homo sapiens (Human).